The chain runs to 1141 residues: Membrane-associated protein gex-3 (1141 aa).

This sequence belongs to the HEM-1/HEM-2 family. Interacts with aco-1, gei-13 and gex-2. Interacts with gex-3. As to expression, expressed in neurons.

The protein resides in the cytoplasm. Functionally, rac effector required for tissue morphogenesis, cell migrations and egg laying. May play a role in egg laying and in yolk protein clatherin-mediated endocytosis by oocytes during oogenesis. Plays a role in the formation of gap junctions between EA and EP endodermal precursor cells in embryos. The chain is Membrane-associated protein gex-3 from Caenorhabditis elegans.